Reading from the N-terminus, the 1755-residue chain is MQLRYFKSILPPADQYQKITSLTWAPNNSRLAAVSTDKVVYLFDENGEKRDKFKTKAAEANNPNTYIIRAMAFSPDSTKLAIAQSDNIVFIYRLVDPDTGAEKKSICNKFPQACAVTSLVWPKDRPNEVVFGLADGKVRLGMLKNNKSYTCYAHPENSYVVALASSLNGQNVISGHMDGAIWKFNFPAEEGGTPTSSQLVVHSCVPYSLGWGSCIAAAGNDNRVVFYDLNGREIRSFDYSNNDEVREFTTCAFNPSGDTVVFGTYNRFYMYTFNIQRNDWEEAGHKQIDNFYAVSAASWKPDGSKMTVGSMTGAVDMYDACVKRHMYKGKFEFTYVSKSAVIVKTLKTGMRIVLKSVYGYEIEKINIYHDRYLIARTTYTLLMGDLDTCKLSEIPWDSDGSEKFHFENERVCMVHYAGELHIVEYGRNDVLGTCRTEHMNPYLISAVVQEARGIASESKKLAYLIDLQTVRIQDLMAPVGSTLATVNHDTKVDWLELNQRGTHLLFRDKKRHLHLFSLSGQERTTLLNYCQYVQWVPGSDVIVAQSRNNLCVWYSVNKPDNVTMFPIKGEVVDIERHNHRTEVIVDEGINTVSYALDEALIYFGAALEDQDYERAVQTLEPLELTPETEAQWMQLAEQALATNQLVIAERCYAALGDIAKSRFLHKVVKKAQQAAKEFGGDGTDAWSVRAMMAQLNKQWPVSESLLLAQGKVDDAITLYQDNHRWEDAIRVADSTHHANAAALKQQYLTWLLETGQEEQAGAVKEREGDYLAAIGLYLKGGLPGRAAQVVMSVHNVNWDPALLDSILASLAKAGLYERAGELYEHMSRSSEAMQSYRRGHAYRKAIDLARREFPAEVIIIEEEWGDWLVTQKQMDAAINHFIESGATLKAIKAAIDCRQFAKAAGIIEVLDPREAMPYFRRIAQHYETTGALEEAERYYIRADMARDAVEMYSRAGKWEAAQRVARGYLTESEMRAFYRAKAAEFEAAHKLKEAEKAYLAAGGDDVDKAIAMYKRNKMYDQMIRLVTQYRKEKVPEAHTLIAQQLEVEGNLREAEKHFVEAKDWKSAVQMYRQVNQWEDALRVAKVYGGVNASKQVAYAWALTLGGDDGAQLLKKMGLLDHAIEYAVESGAFAQAFEMTRAGAKHKLPEVHLKYAMFLEDEGRFAEAEAEFISAGKPKEACDMYMHNQDWDAAMRIAERYDPTMVSEILVSQARVAVERKQWLPAEGLFIKAKRPEAALKMYRDARMWNDALRVAEQYLPTKVAEVQMELLSGQGAGGGSGGASADAVINKARGFERNNDYARAIETYLSLTAQDTSNQDQLEHCWGQAAQLAINYQRHRMKDVVNTVSERLQEIGRHQAAGELHESIDDAQGAIRAYCAGRLWDKARTLAGTNPTFSRYIEDQYNNYLLQNQQADELASRGGQHAQQAIEMYVARDEWAKVHELAAQQGPEVASNYALKHAERRFKQGDYAQAAQVFAQHGITAQPQYFELYKSIAQGVLHASQGDRNPVAEKSLRDMMYRLVNVLRSGGGAGKYKVDTDAFQNYYLAAHYLTCAAAAKEQGLKDIAAMNLTSVLRYVGPTIPADRAFYEAGLAWYEAGRKNMAFVMLNRFLDLSDAMDEPDSSAAVIENADFSDTDIPYDFTIPERAYCTESQREDVRNLVLEISMDRSSDQSLALKACEHCGKPTYEANLTCHFCKKKYDPCVVTGYPIQSYDRVVFKNNGPELNAIRDMWNKWVEAFGTDPVTGMQAAPMY.

WD repeat units lie at residues 14 to 53 (DQYQKITSLTWAPNNSRLAAVSTDKVVYLFDENGEKRDKF), 63 to 102 (PNTYIIRAMAFSPDSTKLAIAQSDNIVFIYRLVDPDTGAE), 111 to 153 (PQAC…TCYA), 155 to 194 (PENSYVVALASSLNGQNVISGHMDGAIWKFNFPAEEGGTP), 198 to 238 (QLVV…RSFD), 289 to 328 (DNFYAVSAASWKPDGSKMTVGSMTGAVDMYDACVKRHMYK), 487 to 525 (NHDTKVDWLELNQRGTHLLFRDKKRHLHLFSLSGQERTT), and 526 to 563 (LLNYCQYVQWVPGSDVIVAQSRNNLCVWYSVNKPDNVT). TPR repeat units lie at residues 597–628 (DEALIYFGAALEDQDYERAVQTLEPLELTPET), 696–729 (NKQWPVSESLLLAQGKVDDAITLYQDNHRWEDAI), 754–788 (TGQEEQAGAVKEREGDYLAAIGLYLKGGLPGRAAQ), 813–846 (AGLYERAGELYEHMSRSSEAMQSYRRGHAYRKAI), 858–892 (IIIEEEWGDWLVTQKQMDAAINHFIESGATLKAIK), 916–949 (MPYFRRIAQHYETTGALEEAERYYIRADMARDAV), 988–1023 (AHKLKEAEKAYLAAGGDDVDKAIAMYKRNKMYDQMI), 1048–1081 (EGNLREAEKHFVEAKDWKSAVQMYRQVNQWEDAL), 1219–1252 (RKQWLPAEGLFIKAKRPEAALKMYRDARMWNDAL), 1285–1318 (ADAVINKARGFERNNDYARAIETYLSLTAQDTSN), 1355–1388 (IGRHQAAGELHESIDDAQGAIRAYCAGRLWDKAR), 1455–1489 (SNYALKHAERRFKQGDYAQAAQVFAQHGITAQPQY), and 1586–1619 (DRAFYEAGLAWYEAGRKNMAFVMLNRFLDLSDAM).

This sequence belongs to the IFT172 family. Component of the IFT complex B, the core composed of IFT25, IFT27, IFT46, IFT52, IFT74, IFT81 and IFT88 as well as associated subunits IFT20, IFT57, IFT80 and IFT172. Interacts with microtubule end-binding protein 1 (MAPRE1/EB1).

The protein resides in the cytoplasm. It localises to the cytoskeleton. The protein localises to the cilium basal body. Functionally, required for the maintenance and formation of cilia and participates in the control of flagellar assembly/disassembly at the tip. Involved in regulating the transition between anterograde and retrograde intraflagellar transport at the tip. The protein is Intraflagellar transport protein 172 (IFT172) of Chlamydomonas reinhardtii (Chlamydomonas smithii).